The chain runs to 208 residues: MTGSLFIITAASGTGKTSLVKQLLATTNDLTVSVSHTTRDPRPGEIDGHHYHFTDVDNFVTAISESQFLEHAEVFGNYYGTSEQSVRAQLDAGVDVILEIDWQGALQVKKIFTDAIMIFILPPSIATLRQRLSTRGQDSMEVIEQRLAGAVNEMAQYINFDYVIINDNFEVALTELKAIIVADRQTLKRQQQRYQRTITNLLSNIVDK.

One can recognise a Guanylate kinase-like domain in the interval 3 to 181 (GSLFIITAAS…ALTELKAIIV (179 aa)). 10-17 (AASGTGKT) contacts ATP.

The protein belongs to the guanylate kinase family.

Its subcellular location is the cytoplasm. The enzyme catalyses GMP + ATP = GDP + ADP. Essential for recycling GMP and indirectly, cGMP. The protein is Guanylate kinase of Psychrobacter arcticus (strain DSM 17307 / VKM B-2377 / 273-4).